The primary structure comprises 389 residues: Glutamate 5-kinase (389 aa).

Lysine 16 serves as a coordination point for ATP. Residues serine 56, aspartate 143, and asparagine 155 each contribute to the substrate site. 175 to 176 (SD) lines the ATP pocket. Positions 281–358 (AGELHVDDGA…AEIETILGYP (78 aa)) constitute a PUA domain.

Belongs to the glutamate 5-kinase family.

The protein resides in the cytoplasm. It catalyses the reaction L-glutamate + ATP = L-glutamyl 5-phosphate + ADP. It functions in the pathway amino-acid biosynthesis; L-proline biosynthesis; L-glutamate 5-semialdehyde from L-glutamate: step 1/2. Catalyzes the transfer of a phosphate group to glutamate to form L-glutamate 5-phosphate. In Rhizobium johnstonii (strain DSM 114642 / LMG 32736 / 3841) (Rhizobium leguminosarum bv. viciae), this protein is Glutamate 5-kinase.